Here is a 337-residue protein sequence, read N- to C-terminus: Ornithine carbamoyltransferase, catabolic (337 aa).

Carbamoyl phosphate is bound by residues 57 to 60 (STRT), Q84, R108, and 135 to 138 (HPTQ). L-ornithine is bound by residues N167, D231, and 235–236 (SM). Carbamoyl phosphate-binding positions include 272 to 273 (CL) and R317.

The protein belongs to the aspartate/ornithine carbamoyltransferase superfamily. OTCase family.

The protein resides in the cytoplasm. The catalysed reaction is carbamoyl phosphate + L-ornithine = L-citrulline + phosphate + H(+). It participates in amino-acid degradation; L-arginine degradation via ADI pathway; carbamoyl phosphate from L-arginine: step 2/2. Its function is as follows. Reversibly catalyzes the transfer of the carbamoyl group from carbamoyl phosphate (CP) to the N(epsilon) atom of ornithine (ORN) to produce L-citrulline. This is Ornithine carbamoyltransferase, catabolic (arcB) from Streptococcus agalactiae.